The chain runs to 446 residues: Glycerol-3-phosphate acyltransferase 3 (446 aa).

3 helical membrane passes run 11-31 (IFII…MFGS), 146-166 (LRVT…LLPL), and 168-188 (ITLA…VGQL). Positions 236–241 (HTSPID) match the HXXXXD motif motif.

It belongs to the 1-acyl-sn-glycerol-3-phosphate acyltransferase family.

The protein resides in the endoplasmic reticulum membrane. It catalyses the reaction sn-glycerol 3-phosphate + an acyl-CoA = a 1-acyl-sn-glycero-3-phosphate + CoA. The enzyme catalyses a 1-acyl-sn-glycero-3-phosphate + an acyl-CoA = a 1,2-diacyl-sn-glycero-3-phosphate + CoA. It carries out the reaction dodecanoyl-CoA + sn-glycerol 3-phosphate = 1-dodecanoyl-sn-glycerol 3-phosphate + CoA. The catalysed reaction is sn-glycerol 3-phosphate + hexadecanoyl-CoA = 1-hexadecanoyl-sn-glycero-3-phosphate + CoA. It catalyses the reaction sn-glycerol 3-phosphate + (9Z)-octadecenoyl-CoA = 1-(9Z-octadecenoyl)-sn-glycero-3-phosphate + CoA. The enzyme catalyses (9Z,12Z)-octadecadienoyl-CoA + sn-glycerol 3-phosphate = 1-(9Z,12Z)-octadecadienoyl-sn-glycero-3-phosphate + CoA. It carries out the reaction 1-tetradecanoyl-sn-glycerol 3-phosphate + (9Z)-octadecenoyl-CoA = 1-tetradecanoyl-2-(9Z)-octadecenoyl-sn-glycero-3-phosphate + CoA. The catalysed reaction is 1-hexadecanoyl-sn-glycero-3-phosphate + (9Z)-octadecenoyl-CoA = 1-hexadecanoyl-2-(9Z-octadecenoyl)-sn-glycero-3-phosphate + CoA. It catalyses the reaction 1-(9Z-octadecenoyl)-sn-glycero-3-phosphate + (9Z)-octadecenoyl-CoA = 1,2-di-(9Z-octadecenoyl)-sn-glycero-3-phosphate + CoA. The enzyme catalyses 1-(6Z,9Z,12Z-octadecatrienoyl)-sn-glycero-3-phosphate + (9Z)-octadecenoyl-CoA = (6Z,9Z,12Z)-octadecatrienoyl-2-(9Z)-octadecenoyl-sn-glycero-3-phosphate + CoA. It carries out the reaction 1-(9Z,12Z,15Z)-octadecatrienoyl-sn-glycero-3-phosphate + (9Z)-octadecenoyl-CoA = 1-(9Z,12Z,15Z)-octadecatrienoyl-2-(9Z)-octadecenoyl-sn-glycero-3-phosphate + CoA. The catalysed reaction is 1-(9Z-octadecenoyl)-sn-glycero-3-phosphate + tetradecanoyl-CoA = 1-(9Z)-octadecenoyl-2-tetradecanoyl-sn-glycero-3-phosphate + CoA. It catalyses the reaction 1-(9Z-octadecenoyl)-sn-glycero-3-phosphate + hexadecanoyl-CoA = 1-(9Z)-octadecenoyl-2-hexadecanoyl-sn-glycero-3-phosphate + CoA. The enzyme catalyses 1-(9Z-octadecenoyl)-sn-glycero-3-phosphate + octadecanoyl-CoA = 1-(9Z-octadecenoyl)-2-octadecanoyl-sn-glycero-3-phosphate + CoA. It carries out the reaction 1-(9Z-octadecenoyl)-sn-glycero-3-phosphate + (9Z,12Z)-octadecadienoyl-CoA = 1-(9Z)-octadecenoyl-2-(9Z,12Z)-octadecadienoyl-sn-glycero-3-phosphate + CoA. The catalysed reaction is 1-(5Z,8Z,11Z,14Z-eicosatetraenoyl)-sn-glycero-3-phosphate + (9Z)-octadecenoyl-CoA = 1-(5Z,8Z,11Z,14Z)-eicosatetraenoyl-2-(9Z)-octadecenoyl-sn-glycero-3-phosphate + CoA. It functions in the pathway glycerolipid metabolism; triacylglycerol biosynthesis. It participates in phospholipid metabolism; CDP-diacylglycerol biosynthesis; CDP-diacylglycerol from sn-glycerol 3-phosphate: step 1/3. Functionally, converts glycerol-3-phosphate to 1-acyl-sn-glycerol-3-phosphate (lysophosphatidic acid or LPA) by incorporating an acyl moiety at the sn-1 position of the glycerol backbone. Also converts LPA into 1,2-diacyl-sn-glycerol-3-phosphate (phosphatidic acid or PA) by incorporating an acyl moiety at the sn-2 position of the glycerol backbone. Protects cells against lipotoxicity. This is Glycerol-3-phosphate acyltransferase 3 from Xenopus laevis (African clawed frog).